The chain runs to 670 residues: tRNA 5-methylaminomethyl-2-thiouridine biosynthesis bifunctional protein MnmC (670 aa).

The segment at 1-242 (MTFSVQHAEI…KRECLSGLKI (242 aa)) is tRNA (mnm(5)s(2)U34)-methyltransferase. The tract at residues 269–670 (IGGGIASFCA…KKWLKGSKVE (402 aa)) is FAD-dependent cmnm(5)s(2)U34 oxidoreductase.

This sequence in the N-terminal section; belongs to the methyltransferase superfamily. tRNA (mnm(5)s(2)U34)-methyltransferase family. It in the C-terminal section; belongs to the DAO family. It depends on FAD as a cofactor.

It is found in the cytoplasm. The catalysed reaction is 5-aminomethyl-2-thiouridine(34) in tRNA + S-adenosyl-L-methionine = 5-methylaminomethyl-2-thiouridine(34) in tRNA + S-adenosyl-L-homocysteine + H(+). Its function is as follows. Catalyzes the last two steps in the biosynthesis of 5-methylaminomethyl-2-thiouridine (mnm(5)s(2)U) at the wobble position (U34) in tRNA. Catalyzes the FAD-dependent demodification of cmnm(5)s(2)U34 to nm(5)s(2)U34, followed by the transfer of a methyl group from S-adenosyl-L-methionine to nm(5)s(2)U34, to form mnm(5)s(2)U34. In Haemophilus influenzae (strain 86-028NP), this protein is tRNA 5-methylaminomethyl-2-thiouridine biosynthesis bifunctional protein MnmC.